A 170-amino-acid polypeptide reads, in one-letter code: Peptide deformylase (170 aa).

Residues Cys-93 and His-135 each contribute to the Fe cation site. The active site involves Glu-136. His-139 serves as a coordination point for Fe cation.

This sequence belongs to the polypeptide deformylase family. It depends on Fe(2+) as a cofactor.

The enzyme catalyses N-terminal N-formyl-L-methionyl-[peptide] + H2O = N-terminal L-methionyl-[peptide] + formate. Functionally, removes the formyl group from the N-terminal Met of newly synthesized proteins. Requires at least a dipeptide for an efficient rate of reaction. N-terminal L-methionine is a prerequisite for activity but the enzyme has broad specificity at other positions. The sequence is that of Peptide deformylase from Acidobacterium capsulatum (strain ATCC 51196 / DSM 11244 / BCRC 80197 / JCM 7670 / NBRC 15755 / NCIMB 13165 / 161).